Consider the following 505-residue polypeptide: MEEYPRYLELDRSRKNDFLFPLIYREYIYRLSHDHGLNRSILLENEGHNNKFSLVIIKRLITRIYQQNHLIISANDSNQNPFLRYNKNLYLQMISEGFAVIVEILFCLQLVSSLEESEIVKSHNLRSIHSLFPFLEDKFPHLNYVSDVLVPYPIHLEKLIQTLRYWVKDPSSLHLFRLVVHEEWNWNSLIISKKSISIFPKSNPRFFFFLYNIYVYEYESIFFFLRNQSFYLRSTFSWVLLERIYFYGKLEQFTDVFANDFPSVLCLFKDPFMHYVRYQGKLILASKYTPLLMKKWKYYLVNLGQCHFYVWFQPEKIYINLLSKHSLDFLGYLSRYRLNPSVVRSQMFENSFIIDNAMKKLDTIVPIIPLIGSLAQTNFCNEIGYPVSNPTRAANSSDSDIIARFLRLCRNLFHYYSGSSKKKSLYRLKYILRLSCVKTLACKHKSTVRFFLKRLGSEFLEEFLTEEARVLSLIFPRVSYISRTLYRGKVWYLDIICINDLSNHK.

This sequence belongs to the intron maturase 2 family. MatK subfamily.

It localises to the plastid. The protein localises to the chloroplast. Functionally, usually encoded in the trnK tRNA gene intron. Probably assists in splicing its own and other chloroplast group II introns. This chain is Maturase K, found in Rhizophora stylosa (Bakau).